The chain runs to 278 residues: Small ribosomal subunit protein uS5 (278 aa).

Residues 1-43 are disordered; that stretch reads MADAPAPAGGRGGFRGGFGGRGRGRGRGRGRGRGRGRGAKDGD. A compositionally biased stretch (gly residues) spans 9–21; sequence GGRGGFRGGFGGR. The span at 22–37 shows a compositional bias: basic residues; it reads GRGRGRGRGRGRGRGR. The 64-residue stretch at 88 to 151 folds into the S5 DRBM domain; it reads LKDEVLKIMP…ILAKLSVVPV (64 aa).

Belongs to the universal ribosomal protein uS5 family.

Functionally, component of the ribosome, a large ribonucleoprotein complex responsible for the synthesis of proteins in the cell. The small ribosomal subunit (SSU) binds messenger RNAs (mRNAs) and translates the encoded message by selecting cognate aminoacyl-transfer RNA (tRNA) molecules. The large subunit (LSU) contains the ribosomal catalytic site termed the peptidyl transferase center (PTC), which catalyzes the formation of peptide bonds, thereby polymerizing the amino acids delivered by tRNAs into a polypeptide chain. The nascent polypeptides leave the ribosome through a tunnel in the LSU and interact with protein factors that function in enzymatic processing, targeting, and the membrane insertion of nascent chains at the exit of the ribosomal tunnel. Plays a role in the assembly and function of the 40S ribosomal subunit. Mutations in this protein affects the control of translational fidelity. Involved in nucleolar processing of pre-18S ribosomal RNA and ribosome assembly. The protein is Small ribosomal subunit protein uS5 (RPS2) of Urechis caupo (Innkeeper worm).